A 314-amino-acid chain; its full sequence is MTASLTTKFLNNTYENPFMNASGVHCMTTEELDELADSKAGAFITKSATTLEREGNPKPRYISVPLGSINSMGLPNEGIDYYLSYVLNRQKKYPDAPAIFFSVAGMSIDENLNLLKKIQDSEFNGITELNLSCPNVPGKPQVAYDFELTKETLEKVFVFFKKPLGIKLPPYFDFAHFDIIAKILNEFPLAYVNSINSIGNGLFIDVEKESVVVKPKNGFGGIGGEYVKPTALANVRAFYTRLRPDIKVIGTGGIKSGKDAFEHLLCGASMLQIGTELQKEGVKIFERIEKELKDIMEAKGYTSIDQFRGKLNSL.

Substrate contacts are provided by residues lysine 46, 70–74 (NSMGL), and asparagine 130. 46-47 (KS) contacts FMN. Asparagine 130 lines the FMN pocket. Residues serine 132 and cysteine 133 each act as nucleophile in the active site. FMN is bound by residues lysine 167 and isoleucine 195. Substrate is bound at residue 196–197 (NS). FMN contacts are provided by residues glycine 224, 252–253 (GG), and 274–275 (GT).

This sequence belongs to the dihydroorotate dehydrogenase family. Type 1 subfamily. In terms of assembly, homodimer. FMN is required as a cofactor.

The protein resides in the cytoplasm. It carries out the reaction (S)-dihydroorotate + fumarate = orotate + succinate. The protein operates within pyrimidine metabolism; UMP biosynthesis via de novo pathway. In terms of biological role, catalyzes the conversion of dihydroorotate to orotate with fumarate as the electron acceptor. In Saccharomyces mikatae (Yeast), this protein is Dihydroorotate dehydrogenase (fumarate) (URA1).